A 597-amino-acid chain; its full sequence is MESNDDRNLEAINASVGRLVWVRRRNGSWWPGQTLVHDQVPDNSLVGPKVGTPIKLLGRDDVSVDWYILENSKTVKAFRCGEYDTCIEKAKASSSKKRSGKCTLREDAINNALKIENEHLAKEDDNLCNLSGEEDSKRCLSGKEDEDSGSSDAEETEDDELASAPEQLQSSISSQEMNNVGASKVQSKRRRTPNDSEDDGTEGVKRMRGLEDIGKEQAGGIVEHKQDLDLICAVGLSDSVSNGNTIANGNKVCSPSSLKRNVSECSKRKNRRRQLTKVLESTAMVSVPVTCDQGVSLDCQGIYDSKVSGMESVESMKSVSVVINNNSDSTGVSCEDAYENVVGASHNNKAKDSEISSISVSAEDDSSDRLFDVPLTGEENHSEGFPAACRISSPRKALVTDLTRRCGRNSHNVFVKNEASNGSACTSPPASEPVNCILSGIEKNTSKWQLKGKRNSRQMSKKQEERRNVYGEEANNNSSTPHSTLYEVKIEVKASYTKPRVPLVSRMSELSGKAIVGHPLSVEILEEDYSNGMVMPPVVAKAKSLPKKNGKKQTTEKAKETVVACIPLKVVFSRINEVLKGSARQTQHRALPSAAKT.

A PWWP domain is found at 16 to 78 (VGRLVWVRRR…LENSKTVKAF (63 aa)). Disordered regions lie at residues 126–210 (NLCN…MRGL) and 449–482 (QLKG…STPH). Residues 134–143 (EDSKRCLSGK) show a composition bias toward basic and acidic residues. The segment covering 144–161 (EDEDSGSSDAEETEDDEL) has biased composition (acidic residues). Positions 166–185 (EQLQSSISSQEMNNVGASKV) are enriched in polar residues. Residues 450–460 (LKGKRNSRQMS) are compositionally biased toward basic residues. Basic and acidic residues predominate over residues 461–470 (KKQEERRNVY).

This is an uncharacterized protein from Arabidopsis thaliana (Mouse-ear cress).